We begin with the raw amino-acid sequence, 336 residues long: UPF0284 protein PYRAB00380 (336 aa).

The protein belongs to the UPF0284 family.

The polypeptide is UPF0284 protein PYRAB00380 (Pyrococcus abyssi (strain GE5 / Orsay)).